Consider the following 166-residue polypeptide: NAD(P)H-quinone oxidoreductase subunit I, chloroplastic (166 aa).

4Fe-4S ferredoxin-type domains are found at residues 55 to 84 (GRIHFEFDKCIACEVCVRVCPIDLPVVDWK) and 95 to 124 (LNYSIDFGICIFCGNCVEYCPTNCLSMTEE). Positions 64, 67, 70, 74, 104, 107, 110, and 114 each coordinate [4Fe-4S] cluster.

It belongs to the complex I 23 kDa subunit family. As to quaternary structure, NDH is composed of at least 16 different subunits, 5 of which are encoded in the nucleus. The cofactor is [4Fe-4S] cluster.

The protein resides in the plastid. Its subcellular location is the chloroplast thylakoid membrane. It catalyses the reaction a plastoquinone + NADH + (n+1) H(+)(in) = a plastoquinol + NAD(+) + n H(+)(out). The catalysed reaction is a plastoquinone + NADPH + (n+1) H(+)(in) = a plastoquinol + NADP(+) + n H(+)(out). In terms of biological role, NDH shuttles electrons from NAD(P)H:plastoquinone, via FMN and iron-sulfur (Fe-S) centers, to quinones in the photosynthetic chain and possibly in a chloroplast respiratory chain. The immediate electron acceptor for the enzyme in this species is believed to be plastoquinone. Couples the redox reaction to proton translocation, and thus conserves the redox energy in a proton gradient. The protein is NAD(P)H-quinone oxidoreductase subunit I, chloroplastic of Polymnia canadensis (White-flowered leaf-cup).